The chain runs to 154 residues: tRNA (cytidine(34)-2'-O)-methyltransferase (154 aa).

S-adenosyl-L-methionine-binding residues include L78, G100, L122, and S130.

This sequence belongs to the class IV-like SAM-binding methyltransferase superfamily. RNA methyltransferase TrmH family. TrmL subfamily. As to quaternary structure, homodimer.

It is found in the cytoplasm. The enzyme catalyses cytidine(34) in tRNA + S-adenosyl-L-methionine = 2'-O-methylcytidine(34) in tRNA + S-adenosyl-L-homocysteine + H(+). It catalyses the reaction 5-carboxymethylaminomethyluridine(34) in tRNA(Leu) + S-adenosyl-L-methionine = 5-carboxymethylaminomethyl-2'-O-methyluridine(34) in tRNA(Leu) + S-adenosyl-L-homocysteine + H(+). Its function is as follows. Methylates the ribose at the nucleotide 34 wobble position in the two leucyl isoacceptors tRNA(Leu)(CmAA) and tRNA(Leu)(cmnm5UmAA). Catalyzes the methyl transfer from S-adenosyl-L-methionine to the 2'-OH of the wobble nucleotide. The chain is tRNA (cytidine(34)-2'-O)-methyltransferase from Methylovorus glucosotrophus (strain SIP3-4).